We begin with the raw amino-acid sequence, 424 residues long: UDP-N-acetylglucosamine 1-carboxyvinyltransferase (424 aa).

Position 22-23 (22-23 (KN)) interacts with phosphoenolpyruvate. Position 93 (Arg93) interacts with UDP-N-acetyl-alpha-D-glucosamine. Cys117 acts as the Proton donor in catalysis. Cys117 carries the 2-(S-cysteinyl)pyruvic acid O-phosphothioketal modification. UDP-N-acetyl-alpha-D-glucosamine is bound by residues 122–126 (RPVDL), 162–165 (KVSV), Asp307, and Ile329.

Belongs to the EPSP synthase family. MurA subfamily.

The protein localises to the cytoplasm. The catalysed reaction is phosphoenolpyruvate + UDP-N-acetyl-alpha-D-glucosamine = UDP-N-acetyl-3-O-(1-carboxyvinyl)-alpha-D-glucosamine + phosphate. It participates in cell wall biogenesis; peptidoglycan biosynthesis. Cell wall formation. Adds enolpyruvyl to UDP-N-acetylglucosamine. The protein is UDP-N-acetylglucosamine 1-carboxyvinyltransferase of Haemophilus influenzae (strain 86-028NP).